Consider the following 336-residue polypeptide: tRNA N6-adenosine threonylcarbamoyltransferase (336 aa).

Residues histidine 112 and histidine 116 each coordinate Fe cation. Substrate contacts are provided by residues 136-140, aspartate 169, glycine 182, and asparagine 276; that span reads LVSGG. Aspartate 304 contacts Fe cation.

This sequence belongs to the KAE1 / TsaD family. It depends on Fe(2+) as a cofactor.

It is found in the cytoplasm. It carries out the reaction L-threonylcarbamoyladenylate + adenosine(37) in tRNA = N(6)-L-threonylcarbamoyladenosine(37) in tRNA + AMP + H(+). Required for the formation of a threonylcarbamoyl group on adenosine at position 37 (t(6)A37) in tRNAs that read codons beginning with adenine. Is involved in the transfer of the threonylcarbamoyl moiety of threonylcarbamoyl-AMP (TC-AMP) to the N6 group of A37, together with TsaE and TsaB. TsaD likely plays a direct catalytic role in this reaction. The polypeptide is tRNA N6-adenosine threonylcarbamoyltransferase (Francisella tularensis subsp. novicida (strain U112)).